A 179-amino-acid polypeptide reads, in one-letter code: Small heat shock protein hspK (179 aa).

One can recognise a sHSP domain in the interval 32-178 (HRINIWRPTV…DRLKIPIQSK (147 aa)). Residues 80 to 122 (KKSKGGLNNLPSSSSSINSDSTTNTNTNTTTTTTTAPPPPSDA) are disordered. A compositionally biased stretch (low complexity) spans 87–114 (NNLPSSSSSINSDSTTNTNTNTTTTTTT).

Belongs to the small heat shock protein (HSP20) family.

The chain is Small heat shock protein hspK (hspK) from Dictyostelium discoideum (Social amoeba).